We begin with the raw amino-acid sequence, 137 residues long: Large ribosomal subunit protein uL16 (137 aa).

It belongs to the universal ribosomal protein uL16 family. In terms of assembly, part of the 50S ribosomal subunit.

Functionally, binds 23S rRNA and is also seen to make contacts with the A and possibly P site tRNAs. In Pseudomonas fluorescens (strain Pf0-1), this protein is Large ribosomal subunit protein uL16.